The primary structure comprises 247 residues: Protein lin-28 homolog B (247 aa).

The interval 1 to 22 is disordered; sequence MAEGGASKGEEPEKLPGLAEDE. The CSD domain maps to 27 to 100; that stretch reads HGTGHCKWFN…GLESIRVTGP (74 aa). A phosphoserine mark is found at Ser-94, Ser-103, and Ser-108. The disordered stretch occupies residues 96 to 124; sequence RVTGPGGSPCLGSERRPKGKTLQKRKPKG. Positions 112-123 are enriched in basic residues; sequence PKGKTLQKRKPK. 2 consecutive CCHC-type zinc fingers follow at residues 125–142 and 147–164; these read DRCY…ECSL and KKCH…NCPH. Cys-127, Cys-130, His-135, Cys-140, Cys-149, Cys-152, His-157, and Cys-162 together coordinate Zn(2+). A compositionally biased stretch (polar residues) spans 173-186; the sequence is SSQGRQEAESQPCS. The tract at residues 173–247 is disordered; sequence SSQGRQEAES…GPLIQKRKKT (75 aa). A compositionally biased stretch (basic and acidic residues) spans 207-219; the sequence is VKSEMAEHSDRSP.

It belongs to the lin-28 family.

Its subcellular location is the nucleus. It is found in the nucleolus. Suppressor of microRNA (miRNA) biogenesis, including that of let-7 and possibly of miR107, miR-143 and miR-200c. Binds primary let-7 transcripts (pri-let-7), including pri-let-7g and pri-let-7a-1, and sequester them in the nucleolus, away from the microprocessor complex, hence preventing their processing into mature miRNA. Does not act on pri-miR21. The repression of let-7 expression is required for normal development and contributes to maintain the pluripotent state of embryonic stem cells by preventing let-7-mediated differentiation. When overexpressed, recruits ZCCHC11/TUT4 uridylyltransferase to pre-let-7 transcripts, leading to their terminal uridylation and degradation. This activity might not be relevant in vivo, as LIN28B-mediated inhibition of let-7 miRNA maturation appears to be ZCCHC11-independent. Interaction with target pre-miRNAs occurs via an 5'-GGAG-3' motif in the pre-miRNA terminal loop. Mediates MYC-induced let-7 repression. When overexpressed, may stimulate growth of carcinoma cell lines. In Mus musculus (Mouse), this protein is Protein lin-28 homolog B (Lin28b).